The following is a 149-amino-acid chain: 3-dehydroquinate dehydratase (149 aa).

The active-site Proton acceptor is the Tyr-22. The substrate site is built by Asn-74, His-80, and Asp-87. The Proton donor role is filled by His-100. Substrate-binding positions include 101 to 102 (LS) and Arg-111.

It belongs to the type-II 3-dehydroquinase family. In terms of assembly, homododecamer.

It catalyses the reaction 3-dehydroquinate = 3-dehydroshikimate + H2O. It participates in metabolic intermediate biosynthesis; chorismate biosynthesis; chorismate from D-erythrose 4-phosphate and phosphoenolpyruvate: step 3/7. Its function is as follows. Catalyzes a trans-dehydration via an enolate intermediate. In Vesicomyosocius okutanii subsp. Calyptogena okutanii (strain HA), this protein is 3-dehydroquinate dehydratase.